A 273-amino-acid polypeptide reads, in one-letter code: Undecaprenyl-diphosphatase (273 aa).

Transmembrane regions (helical) follow at residues 13–35, 45–62, 82–102, 108–128, 186–206, 219–239, and 250–270; these read GLVE…VFGN, VFEI…VFEY, FVLN…LFGK, LFNP…ILWV, TEFS…YDVL, LILI…KALL, and FAYY…SGWI.

The protein belongs to the UppP family.

The protein resides in the cell inner membrane. The enzyme catalyses di-trans,octa-cis-undecaprenyl diphosphate + H2O = di-trans,octa-cis-undecaprenyl phosphate + phosphate + H(+). Catalyzes the dephosphorylation of undecaprenyl diphosphate (UPP). Confers resistance to bacitracin. The sequence is that of Undecaprenyl-diphosphatase from Neisseria meningitidis serogroup A / serotype 4A (strain DSM 15465 / Z2491).